We begin with the raw amino-acid sequence, 274 residues long: Thiazole synthase (274 aa).

Residue Lys-111 is the Schiff-base intermediate with DXP of the active site. 1-deoxy-D-xylulose 5-phosphate contacts are provided by residues Gly-172, 198-199, and 220-221; these read AG and NS. Residues 251 to 274 are disordered; the sequence is RLPERAAASPSSPTTGIIAEAKTK.

The protein belongs to the ThiG family. As to quaternary structure, homotetramer. Forms heterodimers with either ThiH or ThiS.

It localises to the cytoplasm. The enzyme catalyses [ThiS sulfur-carrier protein]-C-terminal-Gly-aminoethanethioate + 2-iminoacetate + 1-deoxy-D-xylulose 5-phosphate = [ThiS sulfur-carrier protein]-C-terminal Gly-Gly + 2-[(2R,5Z)-2-carboxy-4-methylthiazol-5(2H)-ylidene]ethyl phosphate + 2 H2O + H(+). The protein operates within cofactor biosynthesis; thiamine diphosphate biosynthesis. Functionally, catalyzes the rearrangement of 1-deoxy-D-xylulose 5-phosphate (DXP) to produce the thiazole phosphate moiety of thiamine. Sulfur is provided by the thiocarboxylate moiety of the carrier protein ThiS. In vitro, sulfur can be provided by H(2)S. In Prochlorococcus marinus (strain MIT 9313), this protein is Thiazole synthase.